A 92-amino-acid chain; its full sequence is UPF0250 protein XF_1271 (92 aa).

It belongs to the UPF0250 family.

This is UPF0250 protein XF_1271 from Xylella fastidiosa (strain 9a5c).